Consider the following 397-residue polypeptide: MSKILAINAGSSSLKFQLFEMPSETVLTKGIVERIGFDDAIFTITVNGEKIQEVTAIPNHAVAVKMLLDKLISHGIIRSFDEIDGIGHRVVHGGEKFSDSVLITDEVLKQIEEVSELAPLHNPANIVGIKAFQEVLPNVPAVAVFDTAFHQTMPEQSFLYSLPYEYYTKFGIRKYGFHGTSHKYVTQRAAELLGRPIEQLRLISCHLGNGASIAAVEGGKSIDTSMGFTPLAGVAMGTRSGNIDPALIPYIMQKTGMTADEVLEVLNKKSGMLGISGISSDLRDLEKAAAEGNKRAELALEVFANRIHKYIGSYAARMCGVDAIIFTAGIGENSEVIRAKVLRGLEFMGVYWDPALNKVRGKEAFISYPHSPVKVLVIPTNEEVMIARDVVRLANIG.

N8 serves as a coordination point for Mg(2+). ATP is bound at residue K15. R89 serves as a coordination point for substrate. The Proton donor/acceptor role is filled by D146. Residues 206–210 (HLGNG), 281–283 (DLR), and 329–333 (GIGEN) contribute to the ATP site. A Mg(2+)-binding site is contributed by E382.

It belongs to the acetokinase family. As to quaternary structure, homodimer. Mg(2+) serves as cofactor. The cofactor is Mn(2+).

Its subcellular location is the cytoplasm. It carries out the reaction acetate + ATP = acetyl phosphate + ADP. Its pathway is metabolic intermediate biosynthesis; acetyl-CoA biosynthesis; acetyl-CoA from acetate: step 1/2. Its function is as follows. Catalyzes the formation of acetyl phosphate from acetate and ATP. Can also catalyze the reverse reaction. The polypeptide is Acetate kinase (Geobacillus sp. (strain WCH70)).